We begin with the raw amino-acid sequence, 82 residues long: Defensin-like protein 22 (82 aa).

Residues 1 to 24 form the signal peptide; sequence MAGLKVFSFALLLILTFSLIDVEG. Intrachain disulfides connect cysteine 34–cysteine 82, cysteine 44–cysteine 69, cysteine 53–cysteine 78, and cysteine 57–cysteine 80.

Belongs to the DEFL family.

It localises to the secreted. This is Defensin-like protein 22 from Arabidopsis thaliana (Mouse-ear cress).